Reading from the N-terminus, the 187-residue chain is Large ribosomal subunit protein uL10 (187 aa).

Belongs to the universal ribosomal protein uL10 family. As to quaternary structure, part of the ribosomal stalk of the 50S ribosomal subunit. The N-terminus interacts with L11 and the large rRNA to form the base of the stalk. The C-terminus forms an elongated spine to which L12 dimers bind in a sequential fashion forming a multimeric L10(L12)X complex.

Its function is as follows. Forms part of the ribosomal stalk, playing a central role in the interaction of the ribosome with GTP-bound translation factors. The protein is Large ribosomal subunit protein uL10 of Roseiflexus castenholzii (strain DSM 13941 / HLO8).